Consider the following 190-residue polypeptide: 7-methyl-GTP pyrophosphatase (190 aa).

D69 serves as the catalytic Proton acceptor.

It belongs to the Maf family. YceF subfamily. The cofactor is a divalent metal cation.

It is found in the cytoplasm. The enzyme catalyses N(7)-methyl-GTP + H2O = N(7)-methyl-GMP + diphosphate + H(+). Nucleoside triphosphate pyrophosphatase that hydrolyzes 7-methyl-GTP (m(7)GTP). May have a dual role in cell division arrest and in preventing the incorporation of modified nucleotides into cellular nucleic acids. This Xanthomonas oryzae pv. oryzae (strain MAFF 311018) protein is 7-methyl-GTP pyrophosphatase.